The chain runs to 156 residues: Small ribosomal subunit protein uS7 (156 aa).

This sequence belongs to the universal ribosomal protein uS7 family. Part of the 30S ribosomal subunit. Contacts proteins S9 and S11.

Its function is as follows. One of the primary rRNA binding proteins, it binds directly to 16S rRNA where it nucleates assembly of the head domain of the 30S subunit. Is located at the subunit interface close to the decoding center, probably blocks exit of the E-site tRNA. The sequence is that of Small ribosomal subunit protein uS7 from Teredinibacter turnerae (strain ATCC 39867 / T7901).